Consider the following 262-residue polypeptide: Phosphatidylglycerol--prolipoprotein diacylglyceryl transferase (262 aa).

Helical transmembrane passes span 17-37 (LKVH…WILA), 57-77 (LVFY…ALFY), and 92-112 (IWEG…AMYA). Residue Arg140 participates in a 1,2-diacyl-sn-glycero-3-phospho-(1'-sn-glycerol) binding. The next 2 membrane-spanning stretches (helical) occupy residues 200–220 (MAVS…VEFV) and 234–254 (WLTM…VLLA).

Belongs to the Lgt family.

The protein localises to the cell inner membrane. The catalysed reaction is L-cysteinyl-[prolipoprotein] + a 1,2-diacyl-sn-glycero-3-phospho-(1'-sn-glycerol) = an S-1,2-diacyl-sn-glyceryl-L-cysteinyl-[prolipoprotein] + sn-glycerol 1-phosphate + H(+). Its pathway is protein modification; lipoprotein biosynthesis (diacylglyceryl transfer). Its function is as follows. Catalyzes the transfer of the diacylglyceryl group from phosphatidylglycerol to the sulfhydryl group of the N-terminal cysteine of a prolipoprotein, the first step in the formation of mature lipoproteins. The chain is Phosphatidylglycerol--prolipoprotein diacylglyceryl transferase from Methylococcus capsulatus (strain ATCC 33009 / NCIMB 11132 / Bath).